The following is a 127-amino-acid chain: Aspartate 1-decarboxylase (127 aa).

The Schiff-base intermediate with substrate; via pyruvic acid role is filled by Ser25. Ser25 carries the pyruvic acid (Ser) modification. Thr57 provides a ligand contact to substrate. Tyr58 acts as the Proton donor in catalysis. 73 to 75 contributes to the substrate binding site; that stretch reads GAA.

It belongs to the PanD family. As to quaternary structure, heterooctamer of four alpha and four beta subunits. Pyruvate serves as cofactor. In terms of processing, is synthesized initially as an inactive proenzyme, which is activated by self-cleavage at a specific serine bond to produce a beta-subunit with a hydroxyl group at its C-terminus and an alpha-subunit with a pyruvoyl group at its N-terminus.

The protein localises to the cytoplasm. The catalysed reaction is L-aspartate + H(+) = beta-alanine + CO2. It functions in the pathway cofactor biosynthesis; (R)-pantothenate biosynthesis; beta-alanine from L-aspartate: step 1/1. In terms of biological role, catalyzes the pyruvoyl-dependent decarboxylation of aspartate to produce beta-alanine. The protein is Aspartate 1-decarboxylase of Listeria monocytogenes serotype 4b (strain CLIP80459).